A 462-amino-acid chain; its full sequence is Cysteine--tRNA ligase (462 aa).

Position 28 (C28) interacts with Zn(2+). A 'HIGH' region motif is present at residues 30–40 (MTVYDYCHLGH). 3 residues coordinate Zn(2+): C209, H234, and E238. The 'KMSKS' region signature appears at 266–270 (KMAKS). K269 contributes to the ATP binding site.

It belongs to the class-I aminoacyl-tRNA synthetase family. In terms of assembly, monomer. Zn(2+) serves as cofactor.

The protein resides in the cytoplasm. It carries out the reaction tRNA(Cys) + L-cysteine + ATP = L-cysteinyl-tRNA(Cys) + AMP + diphosphate. This is Cysteine--tRNA ligase from Alkalilimnicola ehrlichii (strain ATCC BAA-1101 / DSM 17681 / MLHE-1).